The following is a 134-amino-acid chain: Cytochrome c-type biogenesis protein CcmE (134 aa).

The Cytoplasmic segment spans residues 1 to 7 (MKRKYRR). A helical; Signal-anchor for type II membrane protein membrane pass occupies residues 8 to 28 (LFVVIITLSIFAGSVVFVLGK). At 29–134 (LKNNVSFFYT…MPNKYKTNNL (106 aa)) the chain is on the periplasmic side. Heme contacts are provided by His120 and Tyr124.

Belongs to the CcmE/CycJ family.

Its subcellular location is the cell inner membrane. Functionally, heme chaperone required for the biogenesis of c-type cytochromes. Transiently binds heme delivered by CcmC and transfers the heme to apo-cytochromes in a process facilitated by CcmF and CcmH. The chain is Cytochrome c-type biogenesis protein CcmE from Ehrlichia ruminantium (strain Gardel).